The chain runs to 432 residues: Alpha-ketoglutarate permease (432 aa).

Topologically, residues Met-1 to Leu-32 are cytoplasmic. A helical membrane pass occupies residues Val-33 to Phe-53. The Periplasmic portion of the chain corresponds to Pro-54 to Leu-62. Residues Leu-63–Phe-83 form a helical membrane-spanning segment. Residues Gly-84–Ser-95 are Cytoplasmic-facing. Residues Met-96 to Tyr-116 traverse the membrane as a helical segment. Residues Glu-117–Thr-118 lie on the Periplasmic side of the membrane. Residues Ile-119–Gly-139 form a helical membrane-spanning segment. At Gly-140 to Ala-162 the chain is on the cytoplasmic side. The chain crosses the membrane as a helical span at residues Ser-163–Leu-183. Residues Gln-184 to Arg-193 lie on the Periplasmic side of the membrane. The helical transmembrane segment at Glu-194–Leu-214 threads the bilayer. At Arg-215–Arg-243 the chain is on the cytoplasmic side. A helical transmembrane segment spans residues Ala-244 to Thr-264. The Periplasmic portion of the chain corresponds to Tyr-265–Asn-279. The chain crosses the membrane as a helical span at residues Val-280 to Gly-300. Residues Ala-301 to Arg-309 are Cytoplasmic-facing. Residues Thr-310–Leu-330 traverse the membrane as a helical segment. Over Gln-331–Ala-339 the chain is Periplasmic. A helical transmembrane segment spans residues Phe-340–Leu-360. Residues Lys-361–Gly-373 are Cytoplasmic-facing. Residues Val-374–Leu-394 form a helical membrane-spanning segment. The Periplasmic portion of the chain corresponds to Ser-395–Glu-402. The chain crosses the membrane as a helical span at residues Thr-403–Leu-423. Residues His-424 to Leu-432 lie on the Cytoplasmic side of the membrane.

This sequence belongs to the major facilitator superfamily. Metabolite:H+ Symporter (MHS) family (TC 2.A.1.6) family.

The protein resides in the cell inner membrane. Uptake of alpha-ketoglutarate across the boundary membrane with the concomitant import of a cation (symport system). In Escherichia coli (strain K12), this protein is Alpha-ketoglutarate permease (kgtP).